The following is a 390-amino-acid chain: Endothelial cell-selective adhesion molecule (390 aa).

Residues 1–29 (MISLPGPLVTNLLRFLFLGLSALAPPSRA) form the signal peptide. An Ig-like V-type domain is found at 30–143 (ELQLHLPANQ…NGQASGHSIK (114 aa)). At 30–248 (ELQLHLPANQ…LEVSTGPGAA (219 aa)) the chain is on the extracellular side. Asn108, Asn169, Asn213, and Asn236 each carry an N-linked (GlcNAc...) asparagine glycan. An Ig-like C2-type domain is found at 156–242 (PSCRLQGVPR…AQCNVTLEVS (87 aa)). A disulfide bridge connects residues Cys174 and Cys224. The helical transmembrane segment at 249–269 (VVAGAVVGTLVGLGLLAGLVL) threads the bilayer. Over 270-390 (LYHRRGKALE…PAQSQAGSLV (121 aa)) the chain is Cytoplasmic. Ser301 is subject to Phosphoserine. Residues 316 to 365 (ARALRPPHGPPRPGALTPTPSLSSQALPSPRLPTTDGANPQPISLIPGGV) are disordered. Residues Thr332 and Thr334 each carry the phosphothreonine modification. Over residues 333–342 (PTPSLSSQAL) the composition is skewed to polar residues. Ser336, Ser339, Ser344, and Ser371 each carry phosphoserine.

Interacts with MAGI1.

Its subcellular location is the cell junction. It is found in the adherens junction. The protein resides in the tight junction. It localises to the cell membrane. Functionally, can mediate aggregation most likely through a homophilic molecular interaction. The polypeptide is Endothelial cell-selective adhesion molecule (ESAM) (Macaca fascicularis (Crab-eating macaque)).